The following is a 291-amino-acid chain: ATP synthase gamma chain (291 aa).

The protein belongs to the ATPase gamma chain family. As to quaternary structure, F-type ATPases have 2 components, CF(1) - the catalytic core - and CF(0) - the membrane proton channel. CF(1) has five subunits: alpha(3), beta(3), gamma(1), delta(1), epsilon(1). CF(0) has three main subunits: a, b and c.

It localises to the cell inner membrane. Functionally, produces ATP from ADP in the presence of a proton gradient across the membrane. The gamma chain is believed to be important in regulating ATPase activity and the flow of protons through the CF(0) complex. In Roseobacter denitrificans (strain ATCC 33942 / OCh 114) (Erythrobacter sp. (strain OCh 114)), this protein is ATP synthase gamma chain.